Reading from the N-terminus, the 550-residue chain is Formate--tetrahydrofolate ligase (550 aa).

60-67 (TPFGEGKT) lines the ATP pocket.

Belongs to the formate--tetrahydrofolate ligase family.

It carries out the reaction (6S)-5,6,7,8-tetrahydrofolate + formate + ATP = (6R)-10-formyltetrahydrofolate + ADP + phosphate. It functions in the pathway one-carbon metabolism; tetrahydrofolate interconversion. This is Formate--tetrahydrofolate ligase from Campylobacter curvus (strain 525.92).